Here is a 200-residue protein sequence, read N- to C-terminus: Thymidine kinase (200 aa).

Residues 9–16 and 88–91 each bind ATP; these read STMNAGKS and DEAH. The Proton acceptor role is filled by E89. C146, C148, C183, and H186 together coordinate Zn(2+).

Belongs to the thymidine kinase family. Homotetramer.

It localises to the cytoplasm. The catalysed reaction is thymidine + ATP = dTMP + ADP + H(+). This Rhizobium etli (strain ATCC 51251 / DSM 11541 / JCM 21823 / NBRC 15573 / CFN 42) protein is Thymidine kinase.